The primary structure comprises 218 residues: Adenylate kinase (218 aa).

10 to 15 (GAGKGT) is an ATP binding site. Positions 30–59 (STGDMLRAAIAKGTPLGLSAQKIMESGGLV) are NMP. AMP contacts are provided by residues threonine 31, arginine 36, 57 to 59 (GLV), 85 to 88 (GFPR), and glutamine 92. The tract at residues 122–159 (GRRIHQPSGRVYHVVNQPPKNPGVDDITGEPLIQRDDD) is LID. Residues arginine 123 and 132 to 133 (VY) contribute to the ATP site. Residues arginine 156 and arginine 167 each contribute to the AMP site. Glycine 203 lines the ATP pocket.

Belongs to the adenylate kinase family. As to quaternary structure, monomer.

Its subcellular location is the cytoplasm. It carries out the reaction AMP + ATP = 2 ADP. The protein operates within purine metabolism; AMP biosynthesis via salvage pathway; AMP from ADP: step 1/1. Functionally, catalyzes the reversible transfer of the terminal phosphate group between ATP and AMP. Plays an important role in cellular energy homeostasis and in adenine nucleotide metabolism. The sequence is that of Adenylate kinase from Legionella pneumophila (strain Lens).